The sequence spans 208 residues: Protein-methionine-sulfoxide reductase heme-binding subunit MsrQ (208 aa).

A run of 6 helical transmembrane segments spans residues Ile-16–Gly-36, Trp-53–Trp-73, Met-82–Asp-102, Thr-118–Thr-138, Leu-156–Leu-176, and Glu-178–Val-198.

It belongs to the MsrQ family. As to quaternary structure, heterodimer of a catalytic subunit (MsrP) and a heme-binding subunit (MsrQ). Requires FMN as cofactor. It depends on heme b as a cofactor.

The protein localises to the cell inner membrane. Functionally, part of the MsrPQ system that repairs oxidized periplasmic proteins containing methionine sulfoxide residues (Met-O), using respiratory chain electrons. Thus protects these proteins from oxidative-stress damage caused by reactive species of oxygen and chlorine generated by the host defense mechanisms. MsrPQ is essential for the maintenance of envelope integrity under bleach stress, rescuing a wide series of structurally unrelated periplasmic proteins from methionine oxidation. MsrQ provides electrons for reduction to the reductase catalytic subunit MsrP, using the quinone pool of the respiratory chain. In Rhodospirillum rubrum (strain ATCC 11170 / ATH 1.1.1 / DSM 467 / LMG 4362 / NCIMB 8255 / S1), this protein is Protein-methionine-sulfoxide reductase heme-binding subunit MsrQ.